Here is a 184-residue protein sequence, read N- to C-terminus: Protein FAM89A (184 aa).

The tract at residues 148–184 is disordered; that stretch reads YFQEQNSLHDRRDRGPPRDLSLPVSSLSSSDWILESI. Positions 154–164 are enriched in basic and acidic residues; the sequence is SLHDRRDRGPP. The span at 167 to 184 shows a compositional bias: low complexity; sequence LSLPVSSLSSSDWILESI.

The protein belongs to the FAM89 family.

The protein is Protein FAM89A (FAM89A) of Homo sapiens (Human).